The primary structure comprises 177 residues: tRNA (cytidine(56)-2'-O)-methyltransferase (177 aa).

S-adenosyl-L-methionine contacts are provided by residues L84 and G109–V113.

Belongs to the aTrm56 family. As to quaternary structure, homodimer.

Its subcellular location is the cytoplasm. The enzyme catalyses cytidine(56) in tRNA + S-adenosyl-L-methionine = 2'-O-methylcytidine(56) in tRNA + S-adenosyl-L-homocysteine + H(+). Functionally, specifically catalyzes the AdoMet-dependent 2'-O-ribose methylation of cytidine at position 56 in tRNAs. The chain is tRNA (cytidine(56)-2'-O)-methyltransferase from Methanosarcina acetivorans (strain ATCC 35395 / DSM 2834 / JCM 12185 / C2A).